Consider the following 394-residue polypeptide: Fructose-bisphosphate aldolase, chloroplastic (394 aa).

Residues 1 to 46 constitute a chloroplast transit peptide; that stretch reads MASASLLKTSPVLDNPEFLKGQTLRIPSVAGVRFTPSGSSSLTVRA. Positions 93 and 183 each coordinate substrate. The Proton acceptor role is filled by glutamate 223. Lysine 265 (schiff-base intermediate with dihydroxyacetone-P) is an active-site residue.

Belongs to the class I fructose-bisphosphate aldolase family.

The protein localises to the plastid. It is found in the chloroplast. It catalyses the reaction beta-D-fructose 1,6-bisphosphate = D-glyceraldehyde 3-phosphate + dihydroxyacetone phosphate. Its pathway is carbohydrate degradation; glycolysis; D-glyceraldehyde 3-phosphate and glycerone phosphate from D-glucose: step 4/4. In Spinacia oleracea (Spinach), this protein is Fructose-bisphosphate aldolase, chloroplastic.